A 507-amino-acid chain; its full sequence is Archaeal-type glutamate synthase [NADPH] (507 aa).

4Fe-4S ferredoxin-type domains follow at residues 10–39 (FVVE…YDEN) and 41–70 (NRVY…VRRN). [4Fe-4S] cluster is bound by residues cysteine 19, cysteine 22, cysteine 25, cysteine 29, cysteine 50, cysteine 53, cysteine 56, and cysteine 60.

This sequence belongs to the glutamate synthase family. The cofactor is FMN.

It catalyses the reaction 2 L-glutamate + NADP(+) = L-glutamine + 2-oxoglutarate + NADPH + H(+). This Thermotoga neapolitana (strain ATCC 49049 / DSM 4359 / NBRC 107923 / NS-E) protein is Archaeal-type glutamate synthase [NADPH].